A 2023-amino-acid polypeptide reads, in one-letter code: Protein Daple (2023 aa).

Residues 11 to 131 enclose the Calponin-homology (CH) domain; sequence NFMDSPLVVW…RMLLLILGCA (121 aa). Coiled-coil stretches lie at residues 250–415, 458–1064, and 1105–1419; these read RQHL…LLEE, NESA…VEKN, and LKQI…QYKF. A disordered region spans residues 1013–1035; it reads RHEEEAAHSEISQQTLGQTRSLP. Residues 1022–1033 are compositionally biased toward polar residues; sequence EISQQTLGQTRS. Disordered regions lie at residues 1441–1824 and 1837–2023; these read KPKK…GSAS and LRSN…YGCV. Residues 1442–1460 show a composition bias toward basic and acidic residues; the sequence is PKKESSRERPDAPRERIRS. Over residues 1478–1491 the composition is skewed to pro residues; it reads SAPPPPPPPLPPRQ. Composition is skewed to polar residues over residues 1497–1518 and 1564–1585; these read DSMNSQSVEENHVQSPTLSSPA and TCSTPLSRNSHNAPGFTSSSSL. 2 stretches are compositionally biased toward low complexity: residues 1623–1643 and 1667–1704; these read SAEFSRNTSSSNSPVSSKGSL and RLSQSSLLPRSSTLPCDSPSASRPSQRPASRRPSSPGS. The short motif at 1700 to 1728 is the GBA element; the sequence is SSPGSEMVTLEEFLQESNALSPPTVQTGS. 4 stretches are compositionally biased toward polar residues: residues 1714–1727, 1752–1763, 1785–1799, and 1809–1824; these read QESNALSPPTVQTG, TPTNYVTPTVKT, LTDTSTPPSHSQTLP, and ALQQSSPRGSVGGSAS. The span at 1890–1904 shows a compositional bias: basic and acidic residues; that stretch reads VDPRRLSLAQPRDEF. The segment covering 1927–1945 has biased composition (low complexity); sequence GSGSSRAGAARSGSAQPRG. Over residues 1974–1988 the composition is skewed to basic and acidic residues; the sequence is QEQREAESPLLKKAD. Residues 1989–2014 show a composition bias toward polar residues; sequence TTNLSYASKEQPTSKPASPDPNNDPQ. Residues 2020-2023 carry the PDZ-binding motif; it reads YGCV.

The protein belongs to the CCDC88 family.

The protein localises to the cytoplasm. It is found in the cell junction. In terms of biological role, positive regulator of Wnt signaling, acting synergistically with dvl2. Functions upstream of ctnnb1/beta-catenin in the canonical Wnt pathway, and also activates jnk in the Wnt/planar cell polarity (PCP) pathway. Acts as a non-receptor guanine nucleotide exchange factor which binds to and activates guanine nucleotide-binding protein G(i) alpha (Gi-alpha) subunits. This promotes apical cell constriction and subsequent bending of the neural plate during neurulation via arhgef18. The chain is Protein Daple from Danio rerio (Zebrafish).